The following is a 367-amino-acid chain: UDP-N-acetylglucosamine--N-acetylmuramyl-(pentapeptide) pyrophosphoryl-undecaprenol N-acetylglucosamine transferase (367 aa).

UDP-N-acetyl-alpha-D-glucosamine contacts are provided by residues 15 to 17 (TGG), Asn-127, Arg-163, Ser-191, Ile-249, and Gln-294.

It belongs to the glycosyltransferase 28 family. MurG subfamily.

The protein resides in the cell inner membrane. It carries out the reaction di-trans,octa-cis-undecaprenyl diphospho-N-acetyl-alpha-D-muramoyl-L-alanyl-D-glutamyl-meso-2,6-diaminopimeloyl-D-alanyl-D-alanine + UDP-N-acetyl-alpha-D-glucosamine = di-trans,octa-cis-undecaprenyl diphospho-[N-acetyl-alpha-D-glucosaminyl-(1-&gt;4)]-N-acetyl-alpha-D-muramoyl-L-alanyl-D-glutamyl-meso-2,6-diaminopimeloyl-D-alanyl-D-alanine + UDP + H(+). It functions in the pathway cell wall biogenesis; peptidoglycan biosynthesis. Cell wall formation. Catalyzes the transfer of a GlcNAc subunit on undecaprenyl-pyrophosphoryl-MurNAc-pentapeptide (lipid intermediate I) to form undecaprenyl-pyrophosphoryl-MurNAc-(pentapeptide)GlcNAc (lipid intermediate II). This chain is UDP-N-acetylglucosamine--N-acetylmuramyl-(pentapeptide) pyrophosphoryl-undecaprenol N-acetylglucosamine transferase, found in Burkholderia pseudomallei (strain 668).